A 328-amino-acid polypeptide reads, in one-letter code: Phosphate acyltransferase (328 aa).

This sequence belongs to the PlsX family. As to quaternary structure, homodimer. Probably interacts with PlsY.

It localises to the cytoplasm. It carries out the reaction a fatty acyl-[ACP] + phosphate = an acyl phosphate + holo-[ACP]. It functions in the pathway lipid metabolism; phospholipid metabolism. Catalyzes the reversible formation of acyl-phosphate (acyl-PO(4)) from acyl-[acyl-carrier-protein] (acyl-ACP). This enzyme utilizes acyl-ACP as fatty acyl donor, but not acyl-CoA. The sequence is that of Phosphate acyltransferase from Staphylococcus aureus (strain Mu3 / ATCC 700698).